The chain runs to 532 residues: Phosphoenolpyruvate carboxykinase (ATP) (532 aa).

Arg60, Tyr195, and Lys201 together coordinate substrate. Residues Lys201, His221, and 237 to 245 (GLSGTGKTT) contribute to the ATP site. 2 residues coordinate Mn(2+): Lys201 and His221. Asp258 serves as a coordination point for Mn(2+). ATP is bound by residues Glu287, Arg323, and Thr448. Position 323 (Arg323) interacts with substrate.

It belongs to the phosphoenolpyruvate carboxykinase (ATP) family. Mn(2+) serves as cofactor.

The protein resides in the cytoplasm. The catalysed reaction is oxaloacetate + ATP = phosphoenolpyruvate + ADP + CO2. Its pathway is carbohydrate biosynthesis; gluconeogenesis. Its function is as follows. Involved in the gluconeogenesis. Catalyzes the conversion of oxaloacetate (OAA) to phosphoenolpyruvate (PEP) through direct phosphoryl transfer between the nucleoside triphosphate and OAA. This chain is Phosphoenolpyruvate carboxykinase (ATP), found in Christiangramia forsetii (strain DSM 17595 / CGMCC 1.15422 / KT0803) (Gramella forsetii).